Here is a 60-residue protein sequence, read N- to C-terminus: Translational regulator CsrA (60 aa).

Belongs to the CsrA/RsmA family. Homodimer; the beta-strands of each monomer intercalate to form a hydrophobic core, while the alpha-helices form wings that extend away from the core.

It is found in the cytoplasm. In terms of biological role, a key translational regulator that binds mRNA to regulate translation initiation and/or mRNA stability. Mediates global changes in gene expression, shifting from rapid growth to stress survival by linking envelope stress, the stringent response and the catabolite repression systems. Usually binds in the 5'-UTR; binding at or near the Shine-Dalgarno sequence prevents ribosome-binding, repressing translation, binding elsewhere in the 5'-UTR can activate translation and/or stabilize the mRNA. Its function is antagonized by small RNA(s). In Histophilus somni (strain 2336) (Haemophilus somnus), this protein is Translational regulator CsrA.